Consider the following 595-residue polypeptide: Pectinesterase 5 (595 aa).

Positions 1–24 are cleaved as a signal peptide; sequence MIGKVVVSVASILLIVGVAIGVVA. N-linked (GlcNAc...) asparagine glycosylation is found at asparagine 86 and asparagine 206. The tract at residues 215-239 is disordered; the sequence is SDKGAAPVNKGTPPVADDSPVADPD. Positions 227-239 are enriched in low complexity; that stretch reads PPVADDSPVADPD. An RRLL cleavage motif motif is present at residues 243–246; the sequence is RRLL. The RKLM cleavage motif signature appears at 263-266; that stretch reads RKLM. Residue asparagine 349 is glycosylated (N-linked (GlcNAc...) asparagine). Substrate-binding residues include threonine 360 and glutamine 390. The active-site Proton donor is aspartate 413. Catalysis depends on aspartate 434, which acts as the Nucleophile. Substrate contacts are provided by arginine 503 and tryptophan 505.

In the N-terminal section; belongs to the PMEI family. This sequence in the C-terminal section; belongs to the pectinesterase family. As to quaternary structure, interacts with SBT6.1. As to expression, expressed in pollen grains and pollen tubes.

The protein localises to the cell membrane. The protein resides in the secreted. It localises to the cell wall. Its subcellular location is the golgi apparatus membrane. It catalyses the reaction [(1-&gt;4)-alpha-D-galacturonosyl methyl ester](n) + n H2O = [(1-&gt;4)-alpha-D-galacturonosyl](n) + n methanol + n H(+). It participates in glycan metabolism; pectin degradation; 2-dehydro-3-deoxy-D-gluconate from pectin: step 1/5. Acts in the modification of cell walls via demethylesterification of cell wall pectin. Plays an important role in growth of pollen tubes in female floral tissues, possibly via enhancing the interaction between the pollen tube and female floral tissues by modification of the cell walls. May be regulated by MYB80 during anther development and play a role in tapetum and pollen development. The polypeptide is Pectinesterase 5 (PME5) (Arabidopsis thaliana (Mouse-ear cress)).